Consider the following 142-residue polypeptide: Phenylalanine ammonia-lyase (142 aa).

3 residues coordinate (E)-cinnamate: K66, E94, and N97.

This sequence belongs to the PAL/histidase family. As to quaternary structure, homotetramer. Post-translationally, contains an active site 4-methylidene-imidazol-5-one (MIO), which is formed autocatalytically by cyclization and dehydration of residues Ala-Ser-Gly.

It localises to the cytoplasm. It carries out the reaction L-phenylalanine = (E)-cinnamate + NH4(+). Its pathway is phenylpropanoid metabolism; trans-cinnamate biosynthesis; trans-cinnamate from L-phenylalanine: step 1/1. In terms of biological role, catalyzes the non-oxidative deamination of L-phenylalanine to form trans-cinnamic acid and a free ammonium ion. Facilitates the commitment step in phenylpropanoid pathways that produce secondary metabolites such as lignins, coumarins and flavonoids. This chain is Phenylalanine ammonia-lyase (palA), found in Agaricus bisporus (White button mushroom).